The primary structure comprises 306 residues: tRNA pseudouridine synthase B (306 aa).

The Nucleophile role is filled by Asp-46.

Belongs to the pseudouridine synthase TruB family. Type 1 subfamily.

The enzyme catalyses uridine(55) in tRNA = pseudouridine(55) in tRNA. Responsible for synthesis of pseudouridine from uracil-55 in the psi GC loop of transfer RNAs. This Gluconacetobacter diazotrophicus (strain ATCC 49037 / DSM 5601 / CCUG 37298 / CIP 103539 / LMG 7603 / PAl5) protein is tRNA pseudouridine synthase B.